The chain runs to 282 residues: V-set domain-containing T-cell activation inhibitor 1 (282 aa).

An N-terminal signal peptide occupies residues 1–24; the sequence is MASLGQIIFWSIINVIIILAGAIV. 2 Ig-like V-type domains span residues 35-144 and 153-241; these read HFIT…ANLE and PEIN…IKVT. 2 disulfides stabilise this stretch: C56–C130 and C168–C225. N216 carries N-linked (GlcNAc...) asparagine glycosylation. The GPI-anchor amidated glycine moiety is linked to residue G257. A propeptide spans 258-282 (removed in mature form); the sequence is PSPCVSSVSAAGWALLSLSCCLMLR.

The protein belongs to the immunoglobulin superfamily. BTN/MOG family. N-glycosylated.

The protein localises to the cell membrane. Negatively regulates T-cell-mediated immune response by inhibiting T-cell activation, proliferation, cytokine production and development of cytotoxicity. When expressed on the cell surface of tumor macrophages, plays an important role, together with regulatory T-cells (Treg), in the suppression of tumor-associated antigen-specific T-cell immunity. Involved in promoting epithelial cell transformation. This chain is V-set domain-containing T-cell activation inhibitor 1, found in Rattus norvegicus (Rat).